The following is a 77-amino-acid chain: Acyl carrier protein (77 aa).

Residues 2–77 (ADTLERVTKI…DAVNYIQNQQ (76 aa)) enclose the Carrier domain. Ser-37 bears the O-(pantetheine 4'-phosphoryl)serine mark.

Belongs to the acyl carrier protein (ACP) family. Post-translationally, 4'-phosphopantetheine is transferred from CoA to a specific serine of apo-ACP by AcpS. This modification is essential for activity because fatty acids are bound in thioester linkage to the sulfhydryl of the prosthetic group.

Its subcellular location is the cytoplasm. It participates in lipid metabolism; fatty acid biosynthesis. Carrier of the growing fatty acid chain in fatty acid biosynthesis. The sequence is that of Acyl carrier protein (acpA) from Bacillus subtilis (strain 168).